A 297-amino-acid chain; its full sequence is Elongation factor Ts (297 aa).

Positions 82 to 85 are involved in Mg(2+) ion dislocation from EF-Tu; the sequence is TDFV. Low complexity predominate over residues 223–265; the sequence is AQTAAAAETAPPEVSEPEPAAAVTAEEPTPEPVAAAEQPAEPV. Positions 223–297 are disordered; it reads AQTAAAAETA…GKSRSNKKKK (75 aa). A compositionally biased stretch (basic residues) spans 286-297; it reads SGGKSRSNKKKK.

Belongs to the EF-Ts family.

The protein localises to the cytoplasm. Functionally, associates with the EF-Tu.GDP complex and induces the exchange of GDP to GTP. It remains bound to the aminoacyl-tRNA.EF-Tu.GTP complex up to the GTP hydrolysis stage on the ribosome. The protein is Elongation factor Ts of Thermosynechococcus vestitus (strain NIES-2133 / IAM M-273 / BP-1).